Here is a 214-residue protein sequence, read N- to C-terminus: Redox-sensing transcriptional repressor Rex (214 aa).

The segment at residues 16–55 is a DNA-binding region (H-T-H motif); it reads LYYRYLIFLNDEGKEKVSSTELAEAVQVDSASIRRDFSYF. An NAD(+)-binding site is contributed by 90–95; sequence GVGNMG.

Belongs to the transcriptional regulatory Rex family. In terms of assembly, homodimer.

The protein resides in the cytoplasm. In terms of biological role, modulates transcription in response to changes in cellular NADH/NAD(+) redox state. The polypeptide is Redox-sensing transcriptional repressor Rex (Lactobacillus gasseri (strain ATCC 33323 / DSM 20243 / BCRC 14619 / CIP 102991 / JCM 1131 / KCTC 3163 / NCIMB 11718 / NCTC 13722 / AM63)).